Here is an 84-residue protein sequence, read N- to C-terminus: Large ribosomal subunit protein uL29 (84 aa).

It belongs to the universal ribosomal protein uL29 family.

This is Large ribosomal subunit protein uL29 from Mycoplasma mobile (strain ATCC 43663 / 163K / NCTC 11711) (Mesomycoplasma mobile).